Reading from the N-terminus, the 224-residue chain is Thymidylate kinase (224 aa).

13–20 (GGEGAGKS) contributes to the ATP binding site.

This sequence belongs to the thymidylate kinase family.

It carries out the reaction dTMP + ATP = dTDP + ADP. Functionally, phosphorylation of dTMP to form dTDP in both de novo and salvage pathways of dTTP synthesis. The protein is Thymidylate kinase of Agrobacterium fabrum (strain C58 / ATCC 33970) (Agrobacterium tumefaciens (strain C58)).